A 304-amino-acid polypeptide reads, in one-letter code: MSLLAAVFLGVLQAATEFLPVSSTAHLLVFGELLGHDLADPRFRAFATIIQTGTTLAVLVYFRTEILSLLAAGLRSLARRRPLETPQSRLAWFIVLGTVPAAVLGKLFEERIEALGNWVIAGSLVVLGLVLLAAERYARHLRTVEDVGARDAVLIGLGQALALVPGSSRSGTTITAGMLLGFTREAAARFSFLLSVPIILGAGGYKLWKTVPVLRGEPSWALATLVGTAVSAVAGYLVIDWLLGWLRTRTTHLFVVWRIAAGVALAILIWQGVLPAGHASVSAPAVEAARAADPDAPLGAALRR.

Helical transmembrane passes span 1–21 (MSLLAAVFLGVLQAATEFLPV), 54–74 (TTLAVLVYFRTEILSLLAAGL), 90–110 (LAWFIVLGTVPAAVLGKLFEE), 114–134 (ALGNWVIAGSLVVLGLVLLAA), 192–212 (FLLSVPIILGAGGYKLWKTVP), 225–245 (LVGTAVSAVAGYLVIDWLLGW), and 253–273 (LFVVWRIAAGVALAILIWQGV).

The protein belongs to the UppP family.

It localises to the cell inner membrane. It carries out the reaction di-trans,octa-cis-undecaprenyl diphosphate + H2O = di-trans,octa-cis-undecaprenyl phosphate + phosphate + H(+). Its function is as follows. Catalyzes the dephosphorylation of undecaprenyl diphosphate (UPP). Confers resistance to bacitracin. In Anaeromyxobacter sp. (strain Fw109-5), this protein is Undecaprenyl-diphosphatase.